The following is a 156-amino-acid chain: Ribosome maturation factor RimP (156 aa).

It belongs to the RimP family.

The protein localises to the cytoplasm. Required for maturation of 30S ribosomal subunits. This is Ribosome maturation factor RimP from Microcystis aeruginosa (strain NIES-843 / IAM M-2473).